The following is an 87-amino-acid chain: DNA-directed RNA polymerase subunit omega (87 aa).

This sequence belongs to the RNA polymerase subunit omega family. In terms of assembly, the RNAP catalytic core consists of 2 alpha, 1 beta, 1 beta' and 1 omega subunit. When a sigma factor is associated with the core the holoenzyme is formed, which can initiate transcription.

The catalysed reaction is RNA(n) + a ribonucleoside 5'-triphosphate = RNA(n+1) + diphosphate. In terms of biological role, promotes RNA polymerase assembly. Latches the N- and C-terminal regions of the beta' subunit thereby facilitating its interaction with the beta and alpha subunits. This Pseudomonas entomophila (strain L48) protein is DNA-directed RNA polymerase subunit omega.